The primary structure comprises 321 residues: Cytochrome c biogenesis protein CcsA (321 aa).

8 helical membrane-spanning segments follow: residues 9-29 (ILTHISFSIVSIVITIYLMTL), 44-64 (GLIATFFCITGFLVIRWIYSG), 71-91 (LYESLMFLSWSFSIIHMVPYF), 97-117 (LLSTITAPSAIFTQGFATSGL), 143-163 (MILSYAALLCGSLLSIALLVI), 227-247 (VISLGFIFLTIGILSGAVWAN), 261-275 (TWAFITWTIFAIYLH), and 288-308 (AIVASIGFLIIWICYFGVNLL).

It belongs to the CcmF/CycK/Ccl1/NrfE/CcsA family. In terms of assembly, may interact with Ccs1.

The protein resides in the plastid. The protein localises to the chloroplast thylakoid membrane. Required during biogenesis of c-type cytochromes (cytochrome c6 and cytochrome f) at the step of heme attachment. The polypeptide is Cytochrome c biogenesis protein CcsA (Nandina domestica (Heavenly bamboo)).